The sequence spans 738 residues: Catalase-peroxidase (738 aa).

A compositionally biased stretch (basic and acidic residues) spans 1-16 (MSENHDAIVTDAKTEE). Residues 1–37 (MSENHDAIVTDAKTEEAGGCPVAHGRAPHPTQGGGNR) form a disordered region. The tryptophyl-tyrosyl-methioninium (Trp-Tyr) (with M-257) cross-link spans 108 to 231 (WHSAGTYRIS…LGAVQMGLIY (124 aa)). The active-site Proton acceptor is histidine 109. Positions 231–257 (YVNPEGPNGNPDPIAAARDIRETFGRM) form a cross-link, tryptophyl-tyrosyl-methioninium (Tyr-Met) (with W-108). Histidine 272 contributes to the heme b binding site.

Belongs to the peroxidase family. Peroxidase/catalase subfamily. In terms of assembly, homodimer or homotetramer. The cofactor is heme b. Formation of the three residue Trp-Tyr-Met cross-link is important for the catalase, but not the peroxidase activity of the enzyme.

The enzyme catalyses H2O2 + AH2 = A + 2 H2O. It catalyses the reaction 2 H2O2 = O2 + 2 H2O. Bifunctional enzyme with both catalase and broad-spectrum peroxidase activity. The protein is Catalase-peroxidase of Streptomyces ambofaciens.